The sequence spans 106 residues: 10 kDa heat shock protein, mitochondrial (106 aa).

The residue at position 2 (Ser-2) is an N-acetylserine. The residue at position 31 (Ser-31) is a Phosphoserine.

It belongs to the GroES chaperonin family. As to quaternary structure, homohexamer. Post-translationally, the N-terminus is blocked.

It localises to the mitochondrion matrix. Functionally, eukaryotic CPN10 homolog which is essential for mitochondrial protein biogenesis, together with CPN60. Binds to CPN60 in the presence of Mg-ATP and suppresses the ATPase activity of the latter. In Saccharomyces cerevisiae (strain ATCC 204508 / S288c) (Baker's yeast), this protein is 10 kDa heat shock protein, mitochondrial (HSP10).